The following is a 1079-amino-acid chain: Psi-producing oxygenase A (1079 aa).

The segment at 105–446 is linoleate 8R-lipoxygenase; that stretch reads TNTFLTTLWN…DGSYDDNDLV (342 aa). Position 202 (His-202) interacts with heme b. Residue Tyr-374 is part of the active site. His-377 contributes to the heme b binding site. The interval 654–1079 is 9,12-octadecadienoate 8-hydroperoxide 8R-isomerase; sequence QFINSHSACM…WDGDLPEVKE (426 aa).

It belongs to the peroxidase family. As to quaternary structure, homotetramer. Heme b serves as cofactor.

It catalyses the reaction (9Z,12Z)-octadecadienoate + O2 = (8R,9Z,12Z)-8-hydroperoxyoctadeca-9,12-dienoate. The catalysed reaction is (8R,9Z,12Z)-8-hydroperoxyoctadeca-9,12-dienoate = (5S,8R,9Z,12Z)-5,8-dihydroxyoctadeca-9,12-dienoate. Bifunctional heme-containing enzyme that oxidizes linoleic acid to (8R,9Z,12Z)-8-hydroperoxyoctadeca-9,12-dienoate (within the N-terminal heme peroxidase domain), which is subsequently isomerized to (5S,8R,9Z,12Z)-5,8-dihydroxyoctadeca-9,12-dienoate (within the C-terminal P450 heme thiolate domain). Oxidized unsaturated fatty acids, so-called oxylipins, derived from endogenous fatty acids, influence the development of the asexual conidiophores and sexual cleistothecia and regulate the secondary metabolism. These substances were collectively named psi factors and are primarily a mixture of hydroxylated oleic, linoleic and alpha-linolenic acids. They are termed psi-beta, psi-alpha, and psi-gamma, respectively. Oxylipins may also serve as activators of mammalian immune responses contributing to enhanced resistance to opportunistic fungi and as factors that modulate fungal development contributing to resistance to host defenses. The protein is Psi-producing oxygenase A (ppoA) of Aspergillus fumigatus (strain CBS 144.89 / FGSC A1163 / CEA10) (Neosartorya fumigata).